A 571-amino-acid chain; its full sequence is Phosphoenolpyruvate-protein phosphotransferase (571 aa).

His203 functions as the Tele-phosphohistidine intermediate in the catalytic mechanism. Residues Arg306 and Arg342 each coordinate phosphoenolpyruvate. Residues Glu429 and Asp453 each contribute to the Mg(2+) site. Residues Asn452 to Asp453 and Arg463 contribute to the phosphoenolpyruvate site. Cys500 (proton donor) is an active-site residue.

Belongs to the PEP-utilizing enzyme family. In terms of assembly, homodimer. Requires Mg(2+) as cofactor.

Its subcellular location is the cytoplasm. It catalyses the reaction L-histidyl-[protein] + phosphoenolpyruvate = N(pros)-phospho-L-histidyl-[protein] + pyruvate. Functionally, general (non sugar-specific) component of the phosphoenolpyruvate-dependent sugar phosphotransferase system (sugar PTS). This major carbohydrate active-transport system catalyzes the phosphorylation of incoming sugar substrates concomitantly with their translocation across the cell membrane. Enzyme I transfers the phosphoryl group from phosphoenolpyruvate (PEP) to the phosphoryl carrier protein (HPr). This Chlamydia pneumoniae (Chlamydophila pneumoniae) protein is Phosphoenolpyruvate-protein phosphotransferase (ptsI).